The chain runs to 593 residues: NADH-quinone oxidoreductase subunit C/D (593 aa).

Positions 1 to 184 are NADH dehydrogenase I subunit C; that stretch reads MTADNAIFIP…DPYSLTLAKQ (184 aa). Residues 208–593 are NADH dehydrogenase I subunit D; that stretch reads DYMFLNLGPN…IDFVMADVDR (386 aa).

This sequence in the N-terminal section; belongs to the complex I 30 kDa subunit family. In the C-terminal section; belongs to the complex I 49 kDa subunit family. In terms of assembly, NDH-1 is composed of 13 different subunits. Subunits NuoB, CD, E, F, and G constitute the peripheral sector of the complex.

It localises to the cell inner membrane. The enzyme catalyses a quinone + NADH + 5 H(+)(in) = a quinol + NAD(+) + 4 H(+)(out). In terms of biological role, NDH-1 shuttles electrons from NADH, via FMN and iron-sulfur (Fe-S) centers, to quinones in the respiratory chain. The immediate electron acceptor for the enzyme in this species is believed to be ubiquinone. Couples the redox reaction to proton translocation (for every two electrons transferred, four hydrogen ions are translocated across the cytoplasmic membrane), and thus conserves the redox energy in a proton gradient. The sequence is that of NADH-quinone oxidoreductase subunit C/D from Pseudomonas putida (strain GB-1).